The chain runs to 783 residues: Aconitate hydratase, mitochondrial (783 aa).

The transit peptide at 1–25 directs the protein to the mitochondrion; that stretch reads MITTRLARMGALAPKSRLLFGTRGM. Residues Gln-102 and 195–197 contribute to the substrate site; that span reads DSH. Residues Cys-388, Cys-451, and Cys-454 each coordinate [4Fe-4S] cluster. 2 residues coordinate substrate: Arg-477 and Arg-482. The tract at residues 524–555 is disordered; that stretch reads EFKLKAPTGDGLPSRGYDPGRDTYQAPPTDRS. Substrate is bound by residues Arg-610 and 673 to 674; that span reads SR.

The protein belongs to the aconitase/IPM isomerase family. It depends on [4Fe-4S] cluster as a cofactor.

It localises to the mitochondrion. It catalyses the reaction citrate = D-threo-isocitrate. The enzyme catalyses (2R)-homocitrate = cis-homoaconitate + H2O. It participates in carbohydrate metabolism; tricarboxylic acid cycle; isocitrate from oxaloacetate: step 2/2. It functions in the pathway amino-acid biosynthesis; L-lysine biosynthesis via AAA pathway; L-alpha-aminoadipate from 2-oxoglutarate: step 2/5. Its function is as follows. Catalyzes the isomerization of citrate to isocitrate via cis-aconitate, a step in the citric acid cycle. Also catalyzes the reversible dehydration of (R)-homocitrate to cis-homoaconitate, a step in the alpha-aminoadipate pathway for lysine biosynthesis. In Emericella nidulans (strain FGSC A4 / ATCC 38163 / CBS 112.46 / NRRL 194 / M139) (Aspergillus nidulans), this protein is Aconitate hydratase, mitochondrial (acoA).